Reading from the N-terminus, the 132-residue chain is Fatty acid-binding protein type 3 (132 aa).

This sequence belongs to the calycin superfamily. Fatty-acid binding protein (FABP) family.

The chain is Fatty acid-binding protein type 3 from Fasciola hepatica (Liver fluke).